The primary structure comprises 85 residues: Small ribosomal subunit protein uS17 (85 aa).

Belongs to the universal ribosomal protein uS17 family. In terms of assembly, part of the 30S ribosomal subunit.

Functionally, one of the primary rRNA binding proteins, it binds specifically to the 5'-end of 16S ribosomal RNA. This chain is Small ribosomal subunit protein uS17, found in Ruminiclostridium cellulolyticum (strain ATCC 35319 / DSM 5812 / JCM 6584 / H10) (Clostridium cellulolyticum).